The chain runs to 583 residues: Trehalase (583 aa).

The first 23 residues, 1–23 (MPGRTWELCLLLLLGLGLGSQEA), serve as a signal peptide directing secretion. Asn78 is a glycosylation site (N-linked (GlcNAc...) asparagine). Residues Arg168, 175–176 (WD), Asn212, and 221–223 (RSQ) each bind substrate. N-linked (GlcNAc...) asparagine glycosylation is found at Asn239 and Asn261. Substrate-binding positions include 286-288 (RPE) and Gly319. Asp321 serves as the catalytic Proton donor/acceptor. N-linked (GlcNAc...) asparagine glycosylation is present at Asn369. Glu514 (proton donor/acceptor) is an active-site residue. Substrate is bound at residue Glu529. Ser556 carries GPI-anchor amidated serine lipidation. Residues 557–583 (GAKLAFLEPHCLAATLLPSLLLSLLPW) constitute a propeptide, removed in mature form.

The protein belongs to the glycosyl hydrolase 37 family. Homodimer; disulfide-linked. Expressed in kidney, liver and small intestine. Also more weakly expressed in pancreas.

It is found in the cell membrane. It carries out the reaction alpha,alpha-trehalose + H2O = alpha-D-glucose + beta-D-glucose. Its function is as follows. Intestinal trehalase is probably involved in the hydrolysis of ingested trehalose. The chain is Trehalase from Homo sapiens (Human).